Reading from the N-terminus, the 539-residue chain is Probable transcription factor GLK2 (539 aa).

The interval 86–218 (FASSPDDEPP…NSHGKRKVKV (133 aa)) is disordered. 2 stretches are compositionally biased toward low complexity: residues 99–111 (SAPG…AAAG) and 121–130 (AAAAAAAAAA). Residues 144–161 (KKDDEERSSSLPEEKDAK) show a composition bias toward basic and acidic residues. One can recognise an HTH myb-type domain in the interval 212 to 271 (GKRKVKVDWTPELHRRFVQAVEQLGIDKAVPSRILELMGIECLTRHNIASHLQKYRSHRK). The H-T-H motif DNA-binding region spans 242 to 267 (PSRILELMGIECLTRHNIASHLQKYR).

Expressed in leaves.

It localises to the nucleus. Functionally, probable transcriptional activator that promotes chloroplast development. Acts as an activator of nuclear photosynthetic genes involved in chlorophyll biosynthesis, light harvesting, and electron transport. In Oryza sativa subsp. japonica (Rice), this protein is Probable transcription factor GLK2 (GLK2).